Reading from the N-terminus, the 310-residue chain is tRNA dimethylallyltransferase (310 aa).

9–16 contacts ATP; sequence GPTAVGKT. Position 11–16 (11–16) interacts with substrate; it reads TAVGKT. The tract at residues 34–37 is interaction with substrate tRNA; that stretch reads DSMQ.

The protein belongs to the IPP transferase family. As to quaternary structure, monomer. Requires Mg(2+) as cofactor.

It carries out the reaction adenosine(37) in tRNA + dimethylallyl diphosphate = N(6)-dimethylallyladenosine(37) in tRNA + diphosphate. Catalyzes the transfer of a dimethylallyl group onto the adenine at position 37 in tRNAs that read codons beginning with uridine, leading to the formation of N6-(dimethylallyl)adenosine (i(6)A). In Syntrophomonas wolfei subsp. wolfei (strain DSM 2245B / Goettingen), this protein is tRNA dimethylallyltransferase.